The following is a 115-amino-acid chain: Nucleoid-associated protein LA_4332 (115 aa).

Belongs to the YbaB/EbfC family. As to quaternary structure, homodimer.

It is found in the cytoplasm. Its subcellular location is the nucleoid. Binds to DNA and alters its conformation. May be involved in regulation of gene expression, nucleoid organization and DNA protection. This Leptospira interrogans serogroup Icterohaemorrhagiae serovar Lai (strain 56601) protein is Nucleoid-associated protein LA_4332.